A 537-amino-acid chain; its full sequence is O-phosphoserine--tRNA(Cys) ligase (537 aa).

Substrate contacts are provided by residues 186 to 188, 231 to 233, 273 to 274, and Asn-317; these read HMT, SAS, and YY.

Belongs to the class-II aminoacyl-tRNA synthetase family. O-phosphoseryl-tRNA(Cys) synthetase subfamily. Homotetramer. Interacts with SepCysS.

It catalyses the reaction tRNA(Cys) + O-phospho-L-serine + ATP = O-phospho-L-seryl-tRNA(Cys) + AMP + diphosphate. Its function is as follows. Catalyzes the attachment of O-phosphoserine (Sep) to tRNA(Cys). The protein is O-phosphoserine--tRNA(Cys) ligase of Methanococcus maripaludis (strain C5 / ATCC BAA-1333).